Consider the following 369-residue polypeptide: Flagellar P-ring protein 1 (369 aa).

An N-terminal signal peptide occupies residues 1 to 23 (MRKQSLVTLLMVLLSLVWLPASA).

Belongs to the FlgI family. The basal body constitutes a major portion of the flagellar organelle and consists of four rings (L,P,S, and M) mounted on a central rod.

It localises to the periplasm. Its subcellular location is the bacterial flagellum basal body. In terms of biological role, assembles around the rod to form the L-ring and probably protects the motor/basal body from shearing forces during rotation. In Yersinia pseudotuberculosis serotype I (strain IP32953), this protein is Flagellar P-ring protein 1.